A 71-amino-acid polypeptide reads, in one-letter code: Protein SlyX homolog (71 aa).

Residues 52–71 (RLDQAESSAGAPANERPPHY) are disordered.

This sequence belongs to the SlyX family.

The polypeptide is Protein SlyX homolog (Rhodopseudomonas palustris (strain ATCC BAA-98 / CGA009)).